Consider the following 102-residue polypeptide: Small ribosomal subunit protein uS10 (102 aa).

The protein belongs to the universal ribosomal protein uS10 family. Part of the 30S ribosomal subunit.

Involved in the binding of tRNA to the ribosomes. The polypeptide is Small ribosomal subunit protein uS10 (Nitrosopumilus maritimus (strain SCM1)).